A 107-amino-acid polypeptide reads, in one-letter code: Small ribosomal subunit protein uS10 (107 aa).

Belongs to the universal ribosomal protein uS10 family. In terms of assembly, part of the 30S ribosomal subunit.

Involved in the binding of tRNA to the ribosomes. This Deinococcus geothermalis (strain DSM 11300 / CIP 105573 / AG-3a) protein is Small ribosomal subunit protein uS10.